A 155-amino-acid chain; its full sequence is Pathogenesis-related protein A (155 aa).

It belongs to the BetVI family.

This is Pathogenesis-related protein A (PCPR1-1) from Petroselinum crispum (Parsley).